A 114-amino-acid chain; its full sequence is Holo-[acyl-carrier-protein] synthase (114 aa).

Residues aspartate 8 and glutamate 58 each contribute to the Mg(2+) site.

This sequence belongs to the P-Pant transferase superfamily. AcpS family. Mg(2+) serves as cofactor.

The protein localises to the cytoplasm. It carries out the reaction apo-[ACP] + CoA = holo-[ACP] + adenosine 3',5'-bisphosphate + H(+). Functionally, transfers the 4'-phosphopantetheine moiety from coenzyme A to a Ser of acyl-carrier-protein. The sequence is that of Holo-[acyl-carrier-protein] synthase from Mycoplasma genitalium (strain ATCC 33530 / DSM 19775 / NCTC 10195 / G37) (Mycoplasmoides genitalium).